A 437-amino-acid polypeptide reads, in one-letter code: GTPase Der (437 aa).

EngA-type G domains follow at residues 3 to 167 (ALVA…PAEN) and 177 to 353 (PRIA…AHRS). Residues 9-16 (GRPNVGKS), 56-60 (DTGGW), 119-122 (NKVD), 183-190 (GRPNAGKS), 230-234 (DTAGI), and 295-298 (NKWD) contribute to the GTP site. The KH-like domain maps to 354 to 437 (TRIPTHKLNE…TPINIFIREK (84 aa)).

The protein belongs to the TRAFAC class TrmE-Era-EngA-EngB-Septin-like GTPase superfamily. EngA (Der) GTPase family. As to quaternary structure, associates with the 50S ribosomal subunit.

Functionally, GTPase that plays an essential role in the late steps of ribosome biogenesis. The protein is GTPase Der of Porphyromonas gingivalis (strain ATCC BAA-308 / W83).